A 151-amino-acid polypeptide reads, in one-letter code: uncharacterized protein (151 aa).

This is an uncharacterized protein from Acanthamoeba polyphaga mimivirus (APMV).